Consider the following 518-residue polypeptide: T-box transcription factor TBX5 (518 aa).

Residues 1–46 (MADTDEGFGLARTPLEPDSKDRSCDSKPESALGAPSKSPSSPQAAF) form a disordered region. The span at 15–28 (LEPDSKDRSCDSKP) shows a compositional bias: basic and acidic residues. A compositionally biased stretch (low complexity) spans 34–45 (APSKSPSSPQAA). The segment at residues 58–238 (LHERELWLKF…NNPFAKGFRG (181 aa)) is a DNA-binding region (T-box). Disordered stretches follow at residues 254-307 (EYPV…LLPP) and 330-352 (ECSSTEHPYKKPYMETSPSEEDT). A compositionally biased stretch (polar residues) spans 269 to 301 (SNHSPFSSETRALSTSSNLGSQYQCENGVSGPS). K339 is modified (N6-acetyllysine).

In terms of assembly, monomer. Homodimer (via the T-box); binds DNA as homodimer. Interacts (via the T-box) with NKX2-5 (via the homeobox); this complex binds DNA. Interacts with GATA4. Interacts with KAT2A and KAT2B. In terms of processing, acetylation at Lys-339 by KAT2A and KAT2B promotes nuclear retention.

Its subcellular location is the nucleus. It is found in the cytoplasm. Its function is as follows. DNA-binding protein that regulates the transcription of several genes and is involved in heart development and limb pattern formation. Binds to the core DNA motif of NPPA promoter. This chain is T-box transcription factor TBX5 (Tbx5), found in Mus musculus (Mouse).